The primary structure comprises 379 residues: Acyl-CoA dehydrogenase, short-chain specific (379 aa).

The protein belongs to the acyl-CoA dehydrogenase family. FAD is required as a cofactor.

It carries out the reaction butanoyl-CoA + oxidized [electron-transfer flavoprotein] + H(+) = (2E)-butenoyl-CoA + reduced [electron-transfer flavoprotein]. The catalysed reaction is a short-chain 2,3-saturated fatty acyl-CoA + oxidized [electron-transfer flavoprotein] + H(+) = a short-chain (2E)-enoyl-CoA + reduced [electron-transfer flavoprotein]. Its pathway is lipid metabolism; butanoate metabolism. This chain is Acyl-CoA dehydrogenase, short-chain specific (bcd), found in Clostridium acetobutylicum (strain ATCC 824 / DSM 792 / JCM 1419 / IAM 19013 / LMG 5710 / NBRC 13948 / NRRL B-527 / VKM B-1787 / 2291 / W).